The sequence spans 335 residues: DNA primase small subunit PriS (335 aa).

Catalysis depends on residues Asp96, Asp98, and Asp243.

This sequence belongs to the eukaryotic-type primase small subunit family. As to quaternary structure, heterodimer of a small subunit (PriS) and a large subunit (PriL). Mg(2+) serves as cofactor. Mn(2+) is required as a cofactor.

Functionally, catalytic subunit of DNA primase, an RNA polymerase that catalyzes the synthesis of short RNA molecules used as primers for DNA polymerase during DNA replication. The small subunit contains the primase catalytic core and has DNA synthesis activity on its own. Binding to the large subunit stabilizes and modulates the activity, increasing the rate of DNA synthesis while decreasing the length of the DNA fragments, and conferring RNA synthesis capability. The DNA polymerase activity may enable DNA primase to also catalyze primer extension after primer synthesis. May also play a role in DNA repair. This is DNA primase small subunit PriS from Archaeoglobus fulgidus (strain ATCC 49558 / DSM 4304 / JCM 9628 / NBRC 100126 / VC-16).